A 246-amino-acid chain; its full sequence is Triosephosphate isomerase (246 aa).

9–11 (NWK) is a substrate binding site. His-99 (electrophile) is an active-site residue. Glu-168 serves as the catalytic Proton acceptor. Substrate-binding positions include Gly-174, Ser-207, and 228–229 (GG).

Belongs to the triosephosphate isomerase family. Homodimer.

It localises to the cytoplasm. It carries out the reaction D-glyceraldehyde 3-phosphate = dihydroxyacetone phosphate. The protein operates within carbohydrate biosynthesis; gluconeogenesis. Its pathway is carbohydrate degradation; glycolysis; D-glyceraldehyde 3-phosphate from glycerone phosphate: step 1/1. Functionally, involved in the gluconeogenesis. Catalyzes stereospecifically the conversion of dihydroxyacetone phosphate (DHAP) to D-glyceraldehyde-3-phosphate (G3P). This chain is Triosephosphate isomerase, found in Prochlorococcus marinus (strain NATL2A).